Reading from the N-terminus, the 829-residue chain is MTAKFDVDHVLNSISEDDKIALLSGTDFWHTYSIPEHNVPPIRTTDGPNGVRGTKFFAGVPAACLPCGTALGATWDRDLLHKAGVLLGQECLAKGAHCWLGPTINMQRSPLGGRGFESFAEDPHLSGTMAKSIILGCESTGVISAVKHYVGNDQEHERRAVDVMVTPRALREIYLRPFQIVARDAHSGALMTSYNKINGKHVVENPAMYDIIRKEWKWDPLIMSDWLGTYTTIDSLNAGLDLEMPGPSRYRGKYIESAVQARLVKQSTIDQRARKVLEFAARASQAPASAVESGRDYPEDRALNREICGNSIVLLKNEDTLLPLPKKIKKIALIGSHVKTPAISGGGSASLQPYYAVSLYDAIIEVLPDTEIIYETGAYAHKMLPVIDRMLSNAVIRFYNEPADKERTLLSTEPVNNTAFQLMDYNTPGLNRTLFWATLDGEFTPDVSGLWDFGLTVFGTATLYIDDEMVIDNTTQQTRGTAFFGKGTIQEVGAKELTAGRTYKIRIEFGSANTSPIKAIGVVHFGGGAAHLGAFLHMDPEQMVRDAVKAASEADYTILCTGLNRDWESEGFDRPDMDLPPRIDALISAVLDVAGDKTIIVNQSGTPVMMPWSDRARAIIQAWYGGNETGHGIADVLFGDVNPCAKLPLSWPADVRHNPAYLNSLSVGGRMLYGEDIYVGYRFYEKIGQVTLFPFGHGLSYTLFEVSPKVTVSPTAFTVETPLSATVRIKNTGPVAGAQILQLYVAAPTSATPRPVKELQGFSKVFLQSGEEKTVVISVDKYATSFWDGIEDMWKSEAGVYQVLIGTSSQDIVARGEFTVDETTFWTGV.

Aspartate 225 is an active-site residue. Residues 389–548 (RMLSNAVIRF…DPEQMVRDAV (160 aa)) enclose the PA14 domain. 5 N-linked (GlcNAc...) asparagine glycosylation sites follow: asparagine 416, asparagine 431, asparagine 473, asparagine 602, and asparagine 627.

Belongs to the glycosyl hydrolase 3 family.

Its subcellular location is the secreted. The catalysed reaction is Hydrolysis of terminal, non-reducing beta-D-glucosyl residues with release of beta-D-glucose.. It participates in glycan metabolism; cellulose degradation. Functionally, beta-glucosidases are one of a number of cellulolytic enzymes involved in the degradation of cellulosic biomass. Catalyzes the last step releasing glucose from the inhibitory cellobiose. The protein is Probable beta-glucosidase H (bglH) of Aspergillus clavatus (strain ATCC 1007 / CBS 513.65 / DSM 816 / NCTC 3887 / NRRL 1 / QM 1276 / 107).